A 260-amino-acid chain; its full sequence is Voltage-dependent calcium channel gamma-6 subunit (260 aa).

A run of 4 helical transmembrane segments spans residues 43-63 (LLVAIVGATLAVLAVGTEFWV), 143-163 (VIAVLGLTAMALGCLCVIMVL), 169-189 (SLLRLGAVCFGLSGLLLFVSL), and 221-241 (LGCGVGAGLILLLGGVCFLLL).

The protein belongs to the PMP-22/EMP/MP20 family. CACNG subfamily. In terms of assembly, interacts with CACNA1C. Identified in a complex with the L-type calcium channel subunits CACNA1C, CACNA2D1 and either CACNB1 or CACNB2. Detected in brain and heart (at protein level).

The protein resides in the cell membrane. Regulates the activity of L-type calcium channels that contain CACNA1C as pore-forming subunit. The chain is Voltage-dependent calcium channel gamma-6 subunit (Cacng6) from Mus musculus (Mouse).